The primary structure comprises 245 residues: tRNA (guanine-N(7)-)-methyltransferase (245 aa).

4 residues coordinate S-adenosyl-L-methionine: glutamate 69, glutamate 94, aspartate 121, and aspartate 144. The active site involves aspartate 144. Residues lysine 148, aspartate 180, and threonine 217 to glutamate 220 each bind substrate. Residues asparagine 200–glycine 225 are disordered. Residues proline 209 to glycine 225 are compositionally biased toward basic and acidic residues.

Belongs to the class I-like SAM-binding methyltransferase superfamily. TrmB family.

It carries out the reaction guanosine(46) in tRNA + S-adenosyl-L-methionine = N(7)-methylguanosine(46) in tRNA + S-adenosyl-L-homocysteine. It participates in tRNA modification; N(7)-methylguanine-tRNA biosynthesis. Functionally, catalyzes the formation of N(7)-methylguanine at position 46 (m7G46) in tRNA. The polypeptide is tRNA (guanine-N(7)-)-methyltransferase (Idiomarina loihiensis (strain ATCC BAA-735 / DSM 15497 / L2-TR)).